The following is a 505-amino-acid chain: Protein FAM114A2 (505 aa).

Residues 1 to 65 (MSDKDDIETP…KPSSDLETSK (65 aa)) are disordered. Positions 51-63 (KRPETKPSSDLET) are enriched in basic and acidic residues. Phosphoserine is present on residues serine 87, serine 146, and serine 209. Residues 268–295 (LNSLSGEELETLKVELEQLKETFSLAEF) adopt a coiled-coil conformation. Positions 342–366 (KSLTKPLAENEEGEKQSEAENTEQV) are disordered.

The protein belongs to the FAM114 family.

The sequence is that of Protein FAM114A2 (FAM114A2) from Homo sapiens (Human).